We begin with the raw amino-acid sequence, 300 residues long: N-acetylmuramic acid 6-phosphate etherase (300 aa).

The SIS domain occupies 57–220; sequence VSAAFARQGR…SSAAMIRSGK (164 aa). The active-site Proton donor is Glu85. Glu116 is an active-site residue.

Belongs to the GCKR-like family. MurNAc-6-P etherase subfamily. As to quaternary structure, homodimer.

The catalysed reaction is N-acetyl-D-muramate 6-phosphate + H2O = N-acetyl-D-glucosamine 6-phosphate + (R)-lactate. The protein operates within amino-sugar metabolism; N-acetylmuramate degradation. Its pathway is amino-sugar metabolism; 1,6-anhydro-N-acetylmuramate degradation. It participates in cell wall biogenesis; peptidoglycan recycling. In terms of biological role, specifically catalyzes the cleavage of the D-lactyl ether substituent of MurNAc 6-phosphate, producing GlcNAc 6-phosphate and D-lactate. Together with AnmK, is also required for the utilization of anhydro-N-acetylmuramic acid (anhMurNAc) either imported from the medium or derived from its own cell wall murein, and thus plays a role in cell wall recycling. This chain is N-acetylmuramic acid 6-phosphate etherase, found in Edwardsiella ictaluri (strain 93-146).